The primary structure comprises 481 residues: Hyaluronidase-4 (481 aa).

Residues 1–8 (MKVLSEGQ) are Cytoplasmic-facing. A helical transmembrane segment spans residues 9–29 (LKLCVVQPVHLTSWLLIFFIL). Topologically, residues 30-453 (KSISCLKPAR…ADCREIKTAD (424 aa)) are extracellular. Cystine bridges form between C59–C351, C223–C237, C376–C387, C381–C435, and C437–C446. N-linked (GlcNAc...) asparagine glycans are attached at residues N86 and N115. The active-site Proton donor is the E147. N-linked (GlcNAc...) (complex) asparagine glycosylation is present at N177. Residue N343 is glycosylated (N-linked (GlcNAc...) asparagine). Residues 454 to 474 (GCSGVSPSPGSLMTLCLLLLA) form a helical membrane-spanning segment. The Cytoplasmic segment spans residues 475–481 (SYRSIQL).

Belongs to the glycosyl hydrolase 56 family. As to expression, detected in placenta and skeletal muscle.

It is found in the membrane. The catalysed reaction is Random hydrolysis of (1-&gt;4)-linkages between N-acetyl-beta-D-glucosamine and D-glucuronate residues in hyaluronate.. Its function is as follows. Endo-hyaluronidase that degrades hyaluronan to smaller oligosaccharide fragments. Also has chondroitin sulfate hydrolase activity, The best substrate being the galactosaminidic linkage in the sequence of a trisulfated tetrasaccharide. The polypeptide is Hyaluronidase-4 (HYAL4) (Homo sapiens (Human)).